A 101-amino-acid polypeptide reads, in one-letter code: Small ribosomal subunit protein uS14 (101 aa).

Residues 1 to 10 (MAKKSSIEKN) show a composition bias toward basic and acidic residues. The interval 1 to 23 (MAKKSSIEKNNRRKRMVKNAAPK) is disordered.

Belongs to the universal ribosomal protein uS14 family. Part of the 30S ribosomal subunit. Contacts proteins S3 and S10.

Functionally, binds 16S rRNA, required for the assembly of 30S particles and may also be responsible for determining the conformation of the 16S rRNA at the A site. This chain is Small ribosomal subunit protein uS14, found in Bradyrhizobium diazoefficiens (strain JCM 10833 / BCRC 13528 / IAM 13628 / NBRC 14792 / USDA 110).